We begin with the raw amino-acid sequence, 477 residues long: Bifunctional protein HldE (477 aa).

Positions 1 to 318 are ribokinase; that stretch reads MKVTLPDFRR…ENAIRGRADT (318 aa). Position 195 to 198 (195 to 198) interacts with ATP; it reads NLSE. Asp-264 is an active-site residue. Residues 344 to 477 form a cytidylyltransferase region; sequence MTNGVFDILH…INIIRQGQND (134 aa).

In the N-terminal section; belongs to the carbohydrate kinase PfkB family. It in the C-terminal section; belongs to the cytidylyltransferase family. As to quaternary structure, homodimer.

The catalysed reaction is D-glycero-beta-D-manno-heptose 7-phosphate + ATP = D-glycero-beta-D-manno-heptose 1,7-bisphosphate + ADP + H(+). The enzyme catalyses D-glycero-beta-D-manno-heptose 1-phosphate + ATP + H(+) = ADP-D-glycero-beta-D-manno-heptose + diphosphate. Its pathway is nucleotide-sugar biosynthesis; ADP-L-glycero-beta-D-manno-heptose biosynthesis; ADP-L-glycero-beta-D-manno-heptose from D-glycero-beta-D-manno-heptose 7-phosphate: step 1/4. It functions in the pathway nucleotide-sugar biosynthesis; ADP-L-glycero-beta-D-manno-heptose biosynthesis; ADP-L-glycero-beta-D-manno-heptose from D-glycero-beta-D-manno-heptose 7-phosphate: step 3/4. Functionally, catalyzes the phosphorylation of D-glycero-D-manno-heptose 7-phosphate at the C-1 position to selectively form D-glycero-beta-D-manno-heptose-1,7-bisphosphate. Its function is as follows. Catalyzes the ADP transfer from ATP to D-glycero-beta-D-manno-heptose 1-phosphate, yielding ADP-D-glycero-beta-D-manno-heptose. The protein is Bifunctional protein HldE of Edwardsiella ictaluri (strain 93-146).